The primary structure comprises 138 residues: Large ribosomal subunit protein uL14 (138 aa).

It belongs to the universal ribosomal protein uL14 family. In terms of assembly, part of the 50S ribosomal subunit. Forms a cluster with proteins L3 and L24e, part of which may contact the 16S rRNA in 2 intersubunit bridges.

Functionally, binds to 23S rRNA. Forms part of two intersubunit bridges in the 70S ribosome. The polypeptide is Large ribosomal subunit protein uL14 (Hyperthermus butylicus (strain DSM 5456 / JCM 9403 / PLM1-5)).